The primary structure comprises 913 residues: Striatin-interacting protein homolog (913 aa).

Low complexity-rich tracts occupy residues 177-188 (QQQQQQQQNENE), 195-204 (TNFTTTTTTT), and 791-811 (NNNNSNNNNNNNNNNSTNNDN). 2 disordered regions span residues 177 to 204 (QQQQQQQQNENEGSGEGGTNFTTTTTTT) and 791 to 814 (NNNNSNNNNNNNNNNSTNNDNGLT).

Belongs to the STRIP family.

This Dictyostelium discoideum (Social amoeba) protein is Striatin-interacting protein homolog (fam40).